The chain runs to 161 residues: Nucleotide-binding protein Gmet_3206 (161 aa).

This sequence belongs to the YajQ family.

Nucleotide-binding protein. The chain is Nucleotide-binding protein Gmet_3206 from Geobacter metallireducens (strain ATCC 53774 / DSM 7210 / GS-15).